Reading from the N-terminus, the 1444-residue chain is DNA polymerase III PolC-type (1444 aa).

Residues 428 to 584 enclose the Exonuclease domain; it reads YCVFDVETTG…FDAEATAYLA (157 aa).

Belongs to the DNA polymerase type-C family. PolC subfamily.

The protein localises to the cytoplasm. The catalysed reaction is DNA(n) + a 2'-deoxyribonucleoside 5'-triphosphate = DNA(n+1) + diphosphate. Functionally, required for replicative DNA synthesis. This DNA polymerase also exhibits 3' to 5' exonuclease activity. This Listeria monocytogenes serovar 1/2a (strain ATCC BAA-679 / EGD-e) protein is DNA polymerase III PolC-type.